We begin with the raw amino-acid sequence, 126 residues long: MWKEFKSFAIRGNVIDLAIGVIIGGAFGKIVTSLVNDLMMPLLGLLLGGLDFSALSFTFVDAEIKYGLFIQSIVNFFIISFSIFLFIRYISKLKKKDAEEEKAAPDPQEELLKEIRDLLKEQTNRS.

3 helical membrane-spanning segments follow: residues 14–34, 40–60, and 67–87; these read VIDL…VTSL, MPLL…FTFV, and GLFI…FLFI.

This sequence belongs to the MscL family. As to quaternary structure, homopentamer.

The protein localises to the cell membrane. Channel that opens in response to stretch forces in the membrane lipid bilayer. May participate in the regulation of osmotic pressure changes within the cell. This chain is Large-conductance mechanosensitive channel, found in Bacillus licheniformis (strain ATCC 14580 / DSM 13 / JCM 2505 / CCUG 7422 / NBRC 12200 / NCIMB 9375 / NCTC 10341 / NRRL NRS-1264 / Gibson 46).